We begin with the raw amino-acid sequence, 290 residues long: 4-hydroxy-tetrahydrodipicolinate synthase (290 aa).

Residue T42 coordinates pyruvate. The Proton donor/acceptor role is filled by Y129. K157 acts as the Schiff-base intermediate with substrate in catalysis. A pyruvate-binding site is contributed by I198.

This sequence belongs to the DapA family. As to quaternary structure, homotetramer; dimer of dimers.

It localises to the cytoplasm. The enzyme catalyses L-aspartate 4-semialdehyde + pyruvate = (2S,4S)-4-hydroxy-2,3,4,5-tetrahydrodipicolinate + H2O + H(+). It functions in the pathway amino-acid biosynthesis; L-lysine biosynthesis via DAP pathway; (S)-tetrahydrodipicolinate from L-aspartate: step 3/4. Its function is as follows. Catalyzes the condensation of (S)-aspartate-beta-semialdehyde [(S)-ASA] and pyruvate to 4-hydroxy-tetrahydrodipicolinate (HTPA). This is 4-hydroxy-tetrahydrodipicolinate synthase from Chlamydia felis (strain Fe/C-56) (Chlamydophila felis).